The primary structure comprises 169 residues: MYTSGYANRSSLFSSTAGSIARVSSENTTAGLISEVVYREDQPMMTQLLLLPLLQQLGQQSRWQLWLTPQQKLSREWVQSAGLPLTKVMQISQLSPCHTLESMIRALRTGNYSVVIGWLADELSEEEHTRLAQAADEGNAMGFIMRPVSAHAHATRHHSGLKIHSNLYH.

Residues 106 to 112 form a ftsZ binding region; sequence ALRTGNY. Positions 162 to 169 are lon protease binding; that stretch reads KIHSNLYH.

The protein belongs to the SulA family. As to quaternary structure, interacts with FtsZ. Post-translationally, is rapidly cleaved and degraded by the Lon protease once DNA damage is repaired.

Functionally, component of the SOS system and an inhibitor of cell division. Accumulation of SulA causes rapid cessation of cell division and the appearance of long, non-septate filaments. In the presence of GTP, binds a polymerization-competent form of FtsZ in a 1:1 ratio, thus inhibiting FtsZ polymerization and therefore preventing it from participating in the assembly of the Z ring. This mechanism prevents the premature segregation of damaged DNA to daughter cells during cell division. In Citrobacter koseri (strain ATCC BAA-895 / CDC 4225-83 / SGSC4696), this protein is Cell division inhibitor SulA.